A 1101-amino-acid polypeptide reads, in one-letter code: Rho GTPase-activating protein 30 (1101 aa).

In terms of domain architecture, Rho-GAP spans 20–215 (CDLREHLQHS…FILTHVDQLF (196 aa)). Disordered regions lie at residues 305–397 (RKLP…VRAL) and 450–499 (LQPR…LEDS). A compositionally biased stretch (basic and acidic residues) spans 309 to 319 (LRVEDREEKSS). Low complexity predominate over residues 348 to 367 (SSSSQPSSLMPESLESNSME). Over residues 451–465 (QPRPSPALGPGPPGS) the composition is skewed to pro residues. Position 578 is a phosphoserine (S578). The disordered stretch occupies residues 622-848 (LGPKPINWEG…EQKSIDVETE (227 aa)). 4 stretches are compositionally biased toward basic and acidic residues: residues 659–677 (TRQEKEAKPRSTSDNREEA), 686–762 (EAGK…KGDD), 786–821 (EVVHKHEAEKGRESETKELRRKSDLKSREDQGHSED), and 829–844 (DDRKEGVFSKEQKSID). S875 carries the phosphoserine modification. 2 disordered regions span residues 878 to 901 (EINEQTSEMKQAPLQPSEPEGMEA) and 968 to 987 (CPRPGRLDGTPGEKAWGSRA). Position 996 is a phosphoserine (S996). The segment at 1044–1076 (SRPLSCLERPPEGTEGSEPRSRLSLPPRELHPV) is disordered. Positions 1052–1064 (RPPEGTEGSEPRS) are enriched in basic and acidic residues.

As to quaternary structure, interacts with RHOU in a GTP-independent manner.

The protein resides in the cytoplasmic vesicle. Functionally, GTPase-activating protein (GAP) for RAC1 and RHOA, but not for CDC42. In Mus musculus (Mouse), this protein is Rho GTPase-activating protein 30 (Arhgap30).